Consider the following 231-residue polypeptide: NADH-ubiquinone oxidoreductase chain 4 (231 aa).

The next 6 helical transmembrane spans lie at 1 to 21, 34 to 54, 61 to 80, 84 to 106, 128 to 148, and 169 to 189; these read PIAG…YGII, MFLP…LTCL, SLIA…AIII, WGLT…LFCL, ILPM…ATPP, and TIIL…HMFL.

Belongs to the complex I subunit 4 family.

The protein localises to the mitochondrion membrane. It carries out the reaction a ubiquinone + NADH + 5 H(+)(in) = a ubiquinol + NAD(+) + 4 H(+)(out). Functionally, core subunit of the mitochondrial membrane respiratory chain NADH dehydrogenase (Complex I) that is believed to belong to the minimal assembly required for catalysis. Complex I functions in the transfer of electrons from NADH to the respiratory chain. The immediate electron acceptor for the enzyme is believed to be ubiquinone. The sequence is that of NADH-ubiquinone oxidoreductase chain 4 (MT-ND4) from Atropoides picadoi (Picado's pit viper).